Consider the following 338-residue polypeptide: Ribosomal RNA large subunit methyltransferase F (338 aa).

The interval 1–21 (MTQKKNKPTQKKKGLHPRNPH) is disordered.

Belongs to the methyltransferase superfamily. METTL16/RlmF family.

The protein localises to the cytoplasm. It catalyses the reaction adenosine(1618) in 23S rRNA + S-adenosyl-L-methionine = N(6)-methyladenosine(1618) in 23S rRNA + S-adenosyl-L-homocysteine + H(+). Its function is as follows. Specifically methylates the adenine in position 1618 of 23S rRNA. The chain is Ribosomal RNA large subunit methyltransferase F from Photobacterium profundum (strain SS9).